The chain runs to 120 residues: NADH-ubiquinone oxidoreductase chain 3 (120 aa).

The next 3 helical transmembrane spans lie at 8-28, 63-83, and 90-110; these read YFIL…ISLL, FYLV…LFPW, and ISYF…IGFI.

Belongs to the complex I subunit 3 family.

The protein resides in the mitochondrion membrane. The enzyme catalyses a ubiquinone + NADH + 5 H(+)(in) = a ubiquinol + NAD(+) + 4 H(+)(out). Functionally, core subunit of the mitochondrial membrane respiratory chain NADH dehydrogenase (Complex I) that is believed to belong to the minimal assembly required for catalysis. Complex I functions in the transfer of electrons from NADH to the respiratory chain. The immediate electron acceptor for the enzyme is believed to be ubiquinone. This is NADH-ubiquinone oxidoreductase chain 3 (ND3) from Cyanidium caldarium (Red alga).